The chain runs to 306 residues: Aspartate carbamoyltransferase catalytic subunit (306 aa).

Positions 55 and 56 each coordinate carbamoyl phosphate. Residue Lys-84 coordinates L-aspartate. Positions 105, 133, and 136 each coordinate carbamoyl phosphate. The L-aspartate site is built by Arg-166 and Arg-227. Carbamoyl phosphate-binding residues include Leu-265 and Pro-266.

Belongs to the aspartate/ornithine carbamoyltransferase superfamily. ATCase family. As to quaternary structure, heterododecamer (2C3:3R2) of six catalytic PyrB chains organized as two trimers (C3), and six regulatory PyrI chains organized as three dimers (R2).

It carries out the reaction carbamoyl phosphate + L-aspartate = N-carbamoyl-L-aspartate + phosphate + H(+). It functions in the pathway pyrimidine metabolism; UMP biosynthesis via de novo pathway; (S)-dihydroorotate from bicarbonate: step 2/3. Catalyzes the condensation of carbamoyl phosphate and aspartate to form carbamoyl aspartate and inorganic phosphate, the committed step in the de novo pyrimidine nucleotide biosynthesis pathway. The polypeptide is Aspartate carbamoyltransferase catalytic subunit (Neisseria gonorrhoeae (strain NCCP11945)).